The primary structure comprises 350 residues: tRNA U34 carboxymethyltransferase (350 aa).

Carboxy-S-adenosyl-L-methionine contacts are provided by residues Lys-101, Trp-125, Lys-130, Gly-150, 172-174 (DPS), 208-209 (LE), Met-224, Tyr-228, and Arg-343.

This sequence belongs to the class I-like SAM-binding methyltransferase superfamily. CmoB family. As to quaternary structure, homotetramer.

The catalysed reaction is carboxy-S-adenosyl-L-methionine + 5-hydroxyuridine(34) in tRNA = 5-carboxymethoxyuridine(34) in tRNA + S-adenosyl-L-homocysteine + H(+). Functionally, catalyzes carboxymethyl transfer from carboxy-S-adenosyl-L-methionine (Cx-SAM) to 5-hydroxyuridine (ho5U) to form 5-carboxymethoxyuridine (cmo5U) at position 34 in tRNAs. This Psychrobacter arcticus (strain DSM 17307 / VKM B-2377 / 273-4) protein is tRNA U34 carboxymethyltransferase.